The primary structure comprises 305 residues: Secreted mono- and diacylglycerol lipase A (305 aa).

Residues 1-26 form the signal peptide; it reads MRLSFFTALSAVASLGYALPGKLQSR. 2 disulfide bridges follow: Cys-62–Cys-67 and Cys-129–Cys-132. The active-site Nucleophile is the Ser-171. Asp-225 functions as the Charge relay system in the catalytic mechanism. Asn-251 is a glycosylation site (N-linked (GlcNAc...) asparagine). Residue His-285 is the Charge relay system of the active site. Residues 303-305 constitute a propeptide, removed in mature form; sequence KRV.

Belongs to the AB hydrolase superfamily. Lipase family. Class 3 subfamily. Multiple forms of this lipase are due to the presence of different carbohydrates, which may contribute to the stability of this lipase but not to the enzyme activity.

Its subcellular location is the secreted. It carries out the reaction a monoacylglycerol + H2O = glycerol + a fatty acid + H(+). It catalyses the reaction a diacylglycerol + H2O = a monoacylglycerol + a fatty acid + H(+). Its activity is regulated as follows. Both Fe(3+) and Hg(2+) inhibit the activity significantly. Functionally, secreted lipase strictly specific to mono- and diacylglycerol, but not triacylglycerol. Hydrolyzes long-chain monoacylglycerols most efficiently with the highest activities observed on 1- and 3- monopalmitoyl-sn-glycerol or 1-monostearoyl-rac-glycerol. Prefers to attack alpha positions to beta positions of monoacylglycerol, but shows no stereospecificity on mono- and diacylglycerol. The protein is Secreted mono- and diacylglycerol lipase A of Penicillium camembertii.